We begin with the raw amino-acid sequence, 2176 residues long: Nipped-B-like protein scc-2 (2176 aa).

A compositionally biased stretch (polar residues) spans methionine 1 to alanine 25. Disordered stretches follow at residues methionine 1–glycine 27, proline 150–serine 170, serine 464–glycine 483, methionine 495–lysine 514, tyrosine 523–aspartate 551, glutamine 585–arginine 615, and aspartate 669–glutamate 708. The segment covering serine 464 to threonine 473 has biased composition (low complexity). Composition is skewed to basic and acidic residues over residues glutamate 597 to arginine 615 and serine 685 to glutamate 695. Residues asparagine 696–glutamate 708 show a composition bias toward acidic residues. HEAT repeat units follow at residues aspartate 1280–alanine 1312, glutamate 1320–tyrosine 1351, glutamate 1353–lysine 1388, glutamate 1393–glutamine 1426, glutamate 1692–glutamine 1723, glutamine 1803–glutamine 1834, and glycine 1840–lysine 1871. A disordered region spans residues isoleucine 2149–histidine 2176. The segment covering aspartate 2154 to glycine 2163 has biased composition (acidic residues).

The protein belongs to the SCC2/Nipped-B family. May heterodimerize with mau-2/SCC4 to form the cohesin loading complex.

The protein resides in the nucleus. It localises to the chromosome. Its function is as follows. Plays an important role in the loading of the cohesin complex on to meiotic chromosomes. Forms a heterodimeric complex (also known as cohesin loading complex) with mau-2/SCC4 which mediates the loading of the cohesin complex onto chromatin. Plays an essential role in cell division during embryonic development. Promotes normal chromosome organization during meiosis. Required for the assembly of the synaptonemal complex between homologous chromosomes to promote sister chromatid cohesion during meiosis. Required for chromosome segregation during mitosis and meiosis. Plays a role in DNA double-strand break (DSB) repair during meiotic recombination and promotes the assembly of the 9-1-1 cell-cycle checkpoint response complex which is required for inducing apoptosis in response to DNA damage, at DNA damage sites. The polypeptide is Nipped-B-like protein scc-2 (Caenorhabditis elegans).